The primary structure comprises 553 residues: Arginine--tRNA ligase (553 aa).

The 'HIGH' region motif lies at 130–140 (ANPTGDLHIGH).

This sequence belongs to the class-I aminoacyl-tRNA synthetase family. In terms of assembly, monomer.

It localises to the cytoplasm. It catalyses the reaction tRNA(Arg) + L-arginine + ATP = L-arginyl-tRNA(Arg) + AMP + diphosphate. The protein is Arginine--tRNA ligase of Staphylococcus epidermidis (strain ATCC 35984 / DSM 28319 / BCRC 17069 / CCUG 31568 / BM 3577 / RP62A).